The chain runs to 185 residues: Ubiquitin-conjugating enzyme E2 2 (185 aa).

In terms of domain architecture, UBC core spans 4–150 (PSKKRLIRDF…VKATVEASWL (147 aa)). The active-site Glycyl thioester intermediate is Cys-88. Over residues 149–173 (WLDDGEMPESIEEDDEAEAEAEAEA) the composition is skewed to acidic residues. The interval 149–185 (WLDDGEMPESIEEDDEAEAEAEAEATVDRSAPQTASA) is disordered.

The protein belongs to the ubiquitin-conjugating enzyme family.

It localises to the cytoplasm. The protein localises to the nucleus. It carries out the reaction S-ubiquitinyl-[E1 ubiquitin-activating enzyme]-L-cysteine + [E2 ubiquitin-conjugating enzyme]-L-cysteine = [E1 ubiquitin-activating enzyme]-L-cysteine + S-ubiquitinyl-[E2 ubiquitin-conjugating enzyme]-L-cysteine.. It functions in the pathway protein modification; protein ubiquitination. Its function is as follows. Catalyzes the covalent attachment of ubiquitin to other proteins. Plays a role in transcription regulation by catalyzing the monoubiquitination of histone H2B to form H2BK123ub1. H2BK123ub1 gives a specific tag for epigenetic transcriptional activation and is also a prerequisite for H3K4me and H3K79me formation. Also involved in postreplication repair of UV-damaged DNA, in N-end rule-dependent protein degradation and in sporulation. This Mycosarcoma maydis (Corn smut fungus) protein is Ubiquitin-conjugating enzyme E2 2 (UBC2).